Reading from the N-terminus, the 370-residue chain is Glutamate 5-kinase (370 aa).

Lys13 serves as a coordination point for ATP. Substrate is bound by residues Ser52, Asp139, and Asn151. ATP contacts are provided by residues 171-172 and 211-217; these read SD and SGGMKSK. A PUA domain is found at 275–353; it reads KGELVLDRGA…AEIEAVLGYR (79 aa).

It belongs to the glutamate 5-kinase family.

It localises to the cytoplasm. It catalyses the reaction L-glutamate + ATP = L-glutamyl 5-phosphate + ADP. It participates in amino-acid biosynthesis; L-proline biosynthesis; L-glutamate 5-semialdehyde from L-glutamate: step 1/2. In terms of biological role, catalyzes the transfer of a phosphate group to glutamate to form L-glutamate 5-phosphate. The sequence is that of Glutamate 5-kinase from Thermus thermophilus (strain ATCC BAA-163 / DSM 7039 / HB27).